A 241-amino-acid polypeptide reads, in one-letter code: Transcriptional regulatory protein SrrA (241 aa).

The 114-residue stretch at 4–117 (EILIVDDEDR…EVVLRVKALL (114 aa)) folds into the Response regulatory domain. 4-aspartylphosphate is present on Asp53. The ompR/PhoB-type DNA-binding region spans 133–233 (RDVIEFKHLE…VWGVGYKFEV (101 aa)).

Post-translationally, phosphorylated by SrrB.

The protein localises to the cytoplasm. Its function is as follows. Member of the two-component regulatory system SrrA/SrrB, which is involved in the global regulation of staphylococcal virulence factors in response to environmental oxygen levels as well as biofilm formation. Also plays an essential role in host-derived nitric oxide resistance by regulating hmp/flavohemoglobin, an enzyme that detoxifies nitric oxide by converting it to nitrate. Functions as a transcription regulator by direct binding to promoter regions of target genes. In Staphylococcus aureus (strain NCTC 8325 / PS 47), this protein is Transcriptional regulatory protein SrrA (srrA).